The following is a 196-amino-acid chain: Large ribosomal subunit protein eL15 (196 aa).

The segment at 155–196 (THRGRAERGLTSAGKKGRGQRRKGKGTEKNYPSVQAHDRRGK) is disordered. Residues 169–178 (KKGRGQRRKG) are compositionally biased toward basic residues.

This sequence belongs to the eukaryotic ribosomal protein eL15 family.

This chain is Large ribosomal subunit protein eL15, found in Methanocella arvoryzae (strain DSM 22066 / NBRC 105507 / MRE50).